Here is a 237-residue protein sequence, read N- to C-terminus: LexA repressor (237 aa).

Residues 26–46 (FDEMKEALDLRSKSGIHRLIT) constitute a DNA-binding region (H-T-H motif). Catalysis depends on for autocatalytic cleavage activity residues S158 and K196.

This sequence belongs to the peptidase S24 family. In terms of assembly, homodimer.

The enzyme catalyses Hydrolysis of Ala-|-Gly bond in repressor LexA.. Represses a number of genes involved in the response to DNA damage (SOS response), including recA and lexA. In the presence of single-stranded DNA, RecA interacts with LexA causing an autocatalytic cleavage which disrupts the DNA-binding part of LexA, leading to derepression of the SOS regulon and eventually DNA repair. This is LexA repressor from Xanthobacter autotrophicus (strain ATCC BAA-1158 / Py2).